Reading from the N-terminus, the 868-residue chain is V-set and immunoglobulin domain-containing protein 10-like (868 aa).

Residues 1-27 (MGLSWALLPFLLLAFRAELLALQPALG) form the signal peptide. A compositionally biased stretch (low complexity) spans 26–52 (LGSQPPSASSSHSMGSSRDFVSNVSSS). Positions 26–82 (LGSQPPSASSSHSMGSSRDFVSNVSSSQHPQPPGSEASAGIPDSNRFPQGLNSSHVP) are disordered. Topologically, residues 28–763 (SQPPSASSSH…QAGSDLSPGA (736 aa)) are extracellular. N-linked (GlcNAc...) asparagine glycans are attached at residues asparagine 48, asparagine 77, and asparagine 88. Residues 71 to 80 (RFPQGLNSSH) show a composition bias toward polar residues. Disordered stretches follow at residues 96-154 (LSPD…SGSK) and 323-342 (WSRD…EPPR). Polar residues-rich tracts occupy residues 99-108 (DVTSSETPPS) and 133-143 (PASQISVQTPD). 2 consecutive Ig-like C2-type domains span residues 289 to 381 (PQLS…ADVS) and 389 to 474 (PVIR…SVFN). Cysteines 311 and 365 form a disulfide. Residue asparagine 410 is glycosylated (N-linked (GlcNAc...) asparagine). A disulfide bridge links cysteine 415 with cysteine 458. Asparagine 474, asparagine 628, and asparagine 637 each carry an N-linked (GlcNAc...) asparagine glycan. Residues 764–784 (IAGIVLGSLLGLALLAGLLIL) traverse the membrane as a helical segment. Residues 785–868 (CICCLRRYPG…PWTVRAATQV (84 aa)) are Cytoplasmic-facing.

The protein localises to the membrane. This Mus musculus (Mouse) protein is V-set and immunoglobulin domain-containing protein 10-like (Vsig10l).